A 344-amino-acid polypeptide reads, in one-letter code: Methionine import ATP-binding protein MetN (344 aa).

The ABC transporter domain occupies 2-241 (IELKNIGKQF…PTTQLAQQFI (240 aa)). 38 to 45 (GASGAGKS) lines the ATP pocket.

It belongs to the ABC transporter superfamily. Methionine importer (TC 3.A.1.24) family. In terms of assembly, the complex is composed of two ATP-binding proteins (MetN), two transmembrane proteins (MetI) and a solute-binding protein (MetQ).

Its subcellular location is the cell inner membrane. The catalysed reaction is L-methionine(out) + ATP + H2O = L-methionine(in) + ADP + phosphate + H(+). It catalyses the reaction D-methionine(out) + ATP + H2O = D-methionine(in) + ADP + phosphate + H(+). Part of the ABC transporter complex MetNIQ involved in methionine import. Responsible for energy coupling to the transport system. The polypeptide is Methionine import ATP-binding protein MetN (Haemophilus ducreyi (strain 35000HP / ATCC 700724)).